A 282-amino-acid polypeptide reads, in one-letter code: Biotin synthase (282 aa).

The Radical SAM core domain occupies M1 to R228. C17, C21, and C24 together coordinate [4Fe-4S] cluster. Positions 61, 96, 154, and 221 each coordinate [2Fe-2S] cluster.

This sequence belongs to the radical SAM superfamily. Biotin synthase family. In terms of assembly, homodimer. [4Fe-4S] cluster is required as a cofactor. The cofactor is [2Fe-2S] cluster.

It catalyses the reaction (4R,5S)-dethiobiotin + (sulfur carrier)-SH + 2 reduced [2Fe-2S]-[ferredoxin] + 2 S-adenosyl-L-methionine = (sulfur carrier)-H + biotin + 2 5'-deoxyadenosine + 2 L-methionine + 2 oxidized [2Fe-2S]-[ferredoxin]. It functions in the pathway cofactor biosynthesis; biotin biosynthesis; biotin from 7,8-diaminononanoate: step 2/2. Catalyzes the conversion of dethiobiotin (DTB) to biotin by the insertion of a sulfur atom into dethiobiotin via a radical-based mechanism. The chain is Biotin synthase from Helicobacter pylori (strain G27).